The following is a 61-amino-acid chain: MIHAHSNARLLRWAILAIAPATLGACAPNGPPGLPYPDGKPLIPINTAAPEQGSSCQTRAP.

The signal sequence occupies residues 1–25; it reads MIHAHSNARLLRWAILAIAPATLGA. Residues 29–61 are disordered; that stretch reads NGPPGLPYPDGKPLIPINTAAPEQGSSCQTRAP. Positions 52–61 are enriched in polar residues; it reads QGSSCQTRAP.

The polypeptide is Type IV secretion system protein PtlI homolog (ptlI) (Bordetella bronchiseptica (strain ATCC BAA-588 / NCTC 13252 / RB50) (Alcaligenes bronchisepticus)).